We begin with the raw amino-acid sequence, 893 residues long: TBC domain-containing protein kinase-like protein (893 aa).

The Protein kinase domain occupies 1-274 (MFPLRDTEMG…EELMHDHLFS (274 aa)). Positions 466–651 (DIPPLLRGIT…HLWDTLLLGN (186 aa)) constitute a Rab-GAP TBC domain. Residues 790–889 (SKPKLLVVDI…IKPTGLLTVP (100 aa)) form the Rhodanese domain.

The protein belongs to the protein kinase superfamily. As to quaternary structure, component of the FERRY complex.

Its subcellular location is the cytoplasm. It localises to the cytoskeleton. It is found in the spindle. The protein localises to the midbody. The protein resides in the early endosome. In terms of biological role, component of the FERRY complex (Five-subunit Endosomal Rab5 and RNA/ribosome intermediary). The FERRY complex directly interacts with mRNAs and RAB5A, and functions as a RAB5A effector involved in the localization and the distribution of specific mRNAs most likely by mediating their endosomal transport. The complex recruits mRNAs and ribosomes to early endosomes through direct mRNA-interaction. Also involved in the modulation of mTOR signaling and expression of mTOR complex components. Involved in the control of actin-cytoskeleton organization. In Gallus gallus (Chicken), this protein is TBC domain-containing protein kinase-like protein.